Reading from the N-terminus, the 78-residue chain is Toxin-like protein 10 (78 aa).

The first 23 residues, 1 to 23 (MKATALLIAVFILFSVFGDMGYC), serve as a signal peptide directing secretion.

In terms of processing, contains 4 disulfide bonds. In terms of tissue distribution, expressed by the venom gland.

The protein localises to the secreted. The chain is Toxin-like protein 10 from Urodacus yaschenkoi (Inland robust scorpion).